The primary structure comprises 169 residues: Endoribonuclease YbeY (169 aa).

Positions 126, 130, and 136 each coordinate Zn(2+).

Belongs to the endoribonuclease YbeY family. Zn(2+) serves as cofactor.

It localises to the cytoplasm. Functionally, single strand-specific metallo-endoribonuclease involved in late-stage 70S ribosome quality control and in maturation of the 3' terminus of the 16S rRNA. This is Endoribonuclease YbeY from Bradyrhizobium sp. (strain BTAi1 / ATCC BAA-1182).